We begin with the raw amino-acid sequence, 177 residues long: Translation initiation factor IF-3 (177 aa).

It belongs to the IF-3 family. Monomer.

It is found in the cytoplasm. In terms of biological role, IF-3 binds to the 30S ribosomal subunit and shifts the equilibrium between 70S ribosomes and their 50S and 30S subunits in favor of the free subunits, thus enhancing the availability of 30S subunits on which protein synthesis initiation begins. This chain is Translation initiation factor IF-3, found in Nostoc sp. (strain PCC 7120 / SAG 25.82 / UTEX 2576).